We begin with the raw amino-acid sequence, 212 residues long: 3-demethoxyubiquinol 3-hydroxylase (212 aa).

Over residues 1–14 the composition is skewed to low complexity; sequence MTSPSSRTPRGSTP. Positions 1–22 are disordered; the sequence is MTSPSSRTPRGSTPPFEPSADE. Glutamate 58, glutamate 89, histidine 92, glutamate 141, glutamate 173, and histidine 176 together coordinate Fe cation.

This sequence belongs to the COQ7 family. The cofactor is Fe cation.

The protein localises to the cell membrane. The catalysed reaction is a 5-methoxy-2-methyl-3-(all-trans-polyprenyl)benzene-1,4-diol + AH2 + O2 = a 3-demethylubiquinol + A + H2O. It participates in cofactor biosynthesis; ubiquinone biosynthesis. Functionally, catalyzes the hydroxylation of 2-nonaprenyl-3-methyl-6-methoxy-1,4-benzoquinol during ubiquinone biosynthesis. This chain is 3-demethoxyubiquinol 3-hydroxylase, found in Rhodospirillum rubrum (strain ATCC 11170 / ATH 1.1.1 / DSM 467 / LMG 4362 / NCIMB 8255 / S1).